The following is a 333-amino-acid chain: Lipoyl synthase (333 aa).

7 residues coordinate [4Fe-4S] cluster: cysteine 55, cysteine 60, cysteine 66, cysteine 81, cysteine 85, cysteine 88, and serine 292. The Radical SAM core domain maps to 67–281 (WEDREATFLI…SAEAERLGFA (215 aa)).

Belongs to the radical SAM superfamily. Lipoyl synthase family. Requires [4Fe-4S] cluster as cofactor.

The protein resides in the cytoplasm. It carries out the reaction [[Fe-S] cluster scaffold protein carrying a second [4Fe-4S](2+) cluster] + N(6)-octanoyl-L-lysyl-[protein] + 2 oxidized [2Fe-2S]-[ferredoxin] + 2 S-adenosyl-L-methionine + 4 H(+) = [[Fe-S] cluster scaffold protein] + N(6)-[(R)-dihydrolipoyl]-L-lysyl-[protein] + 4 Fe(3+) + 2 hydrogen sulfide + 2 5'-deoxyadenosine + 2 L-methionine + 2 reduced [2Fe-2S]-[ferredoxin]. It functions in the pathway protein modification; protein lipoylation via endogenous pathway; protein N(6)-(lipoyl)lysine from octanoyl-[acyl-carrier-protein]: step 2/2. Catalyzes the radical-mediated insertion of two sulfur atoms into the C-6 and C-8 positions of the octanoyl moiety bound to the lipoyl domains of lipoate-dependent enzymes, thereby converting the octanoylated domains into lipoylated derivatives. The chain is Lipoyl synthase from Kineococcus radiotolerans (strain ATCC BAA-149 / DSM 14245 / SRS30216).